The chain runs to 212 residues: Ribosomal RNA small subunit methyltransferase G (212 aa).

S-adenosyl-L-methionine-binding positions include G80, L85, 131–132 (VE), and R146.

Belongs to the methyltransferase superfamily. RNA methyltransferase RsmG family.

It localises to the cytoplasm. It carries out the reaction guanosine(527) in 16S rRNA + S-adenosyl-L-methionine = N(7)-methylguanosine(527) in 16S rRNA + S-adenosyl-L-homocysteine. Its function is as follows. Specifically methylates the N7 position of guanine in position 527 of 16S rRNA. This chain is Ribosomal RNA small subunit methyltransferase G, found in Azoarcus sp. (strain BH72).